The chain runs to 554 residues: Terpene synthase 17 (554 aa).

Residues D306, D310, and E458 each coordinate Mg(2+). The DDXXD motif motif lies at 306-310 (DDTYD).

The protein belongs to the terpene synthase family. Tpsa subfamily. Mg(2+) serves as cofactor. The cofactor is Mn(2+). In terms of tissue distribution, mostly expressed in stem and trichomes, to a lower extent in leaves, flowers and roots and, at low levels, in fruits.

The catalysed reaction is (2Z,6Z)-farnesyl diphosphate = beta-bisabolene + diphosphate. It catalyses the reaction (2E,6E)-farnesyl diphosphate = (+)-valencene + diphosphate. The enzyme catalyses (2E,6E)-farnesyl diphosphate = (E)-beta-farnesene + diphosphate. It carries out the reaction (2E,6E)-farnesyl diphosphate = gamma-gurjunene + diphosphate. The catalysed reaction is (2Z,6Z)-farnesyl diphosphate = (E)-gamma-bisabolene + diphosphate. It catalyses the reaction (2E)-geranyl diphosphate = limonene + diphosphate. The enzyme catalyses (2E)-geranyl diphosphate = beta-myrcene + diphosphate. It carries out the reaction (2E)-geranyl diphosphate = (E)-beta-ocimene + diphosphate. The catalysed reaction is (2E)-geranyl diphosphate = terpinolene + diphosphate. It catalyses the reaction (2E)-geranyl diphosphate = gamma-terpinene + diphosphate. The enzyme catalyses (2Z,6Z)-farnesyl diphosphate = (Z)-gamma-bisabolene + diphosphate. It carries out the reaction (2E,6E)-farnesyl diphosphate = (1S,5S,6R)-alpha-bergamotene + diphosphate. The catalysed reaction is (2Z,6Z)-farnesyl diphosphate = (1S,5S,6S)-alpha-bergamotene + diphosphate. It participates in secondary metabolite biosynthesis; terpenoid biosynthesis. Functionally, sesquiterpene synthase involved in the biosynthesis of volatile compounds. Mediates the conversion of (2E,6E)-farnesyl diphosphate (FPP) into gamma-gurjunene, (E)-beta-farnesene and (+)-valencene, and of (2Z,6Z)-farnesyl diphosphate ((ZZ)-FPP) into (E)-alpha-bergamotene and (Z)-gamma-bisabolene as well as beta-bisabolene, (Z)-alpha-bergamotene and (E)-gamma-bisabolene to a lower extent. Can act with a low efficiency as a monoterpene synthase with geranyl diphosphate (GPP) as substrate, thus producing beta-myrcene, (E)-beta-ocimene, limonene, terpinolene, gamma-terpinene and (Z)-beta-ocimene. The sequence is that of Terpene synthase 17 from Solanum lycopersicum (Tomato).